The chain runs to 534 residues: Dolichol kinase (534 aa).

Residues 1 to 16 lie on the Cytoplasmic side of the membrane; the sequence is MTRQCPPQESGAALSG. A helical transmembrane segment spans residues 17-37; that stretch reads SVLAEAAVVFAVVLSIHAAVW. The Extracellular portion of the chain corresponds to 38–72; sequence DRYSWCAVALAVQAFYVQYKWDRLLQQGNAVFQFR. Residues 73 to 93 form a helical membrane-spanning segment; it reads MSANSGLLPASMVMPLLGLVM. Residues 94–109 lie on the Cytoplasmic side of the membrane; sequence KERCQTAGNPYFERFG. A helical membrane pass occupies residues 110-130; sequence IVVAATGMAVALFSSVLALGI. Residues 131–132 are Extracellular-facing; that stretch reads TR. The chain crosses the membrane as a helical span at residues 133 to 153; the sequence is PVPTNTCAISGLAGGVIIYIM. At 154-161 the chain is on the cytoplasmic side; the sequence is RHSLSVGE. The helical transmembrane segment at 162–182 threads the bilayer; it reads VIEVLEVLLIFVYLNMILLYL. The Extracellular portion of the chain corresponds to 183–186; sequence LPRC. The chain crosses the membrane as a helical span at residues 187-207; it reads FTPGEALLVLGGISFVLNQLI. Topologically, residues 208–220 are cytoplasmic; it reads KRSLTESQGDPVD. A helical membrane pass occupies residues 221–241; that stretch reads FFLLVVVVGMVLMGVFFSTLF. Residues 242–252 are Extracellular-facing; sequence VFMDSGTWASS. The chain crosses the membrane as a helical span at residues 253–273; that stretch reads IFFHLMTCVLGLGVVLPWLHW. Topologically, residues 274–293 are cytoplasmic; the sequence is LIRRNPLLWLLQFLFYTETR. A helical membrane pass occupies residues 294 to 314; it reads IYLLAYWSLLASVACLVVLYQ. Over 315 to 333 the chain is Extracellular; sequence NAKRSSSESKKHRAPTITR. A helical transmembrane segment spans residues 334 to 350; that stretch reads KYFHFIVVATYIPGIIF. The Cytoplasmic portion of the chain corresponds to 351 to 355; it reads DRPLL. Residues 356-376 traverse the membrane as a helical segment; that stretch reads YVAATVCLAVFIFLEYVRYFR. Residues 377 to 397 are Extracellular-facing; that stretch reads IKPLGHTLRSLLSLFLDERDS. Residues 398–418 traverse the membrane as a helical segment; the sequence is GPLILTHIYLLLGMSLPIWLI. Residues 419 to 432 lie on the Cytoplasmic side of the membrane; it reads PRPCTQKDSLEGAR. The helical transmembrane segment at 433-453 threads the bilayer; the sequence is ALVPYAGVLAVGVGDTVASIF. The Extracellular segment spans residues 454–468; it reads GSTMGEIRWPGTKKT. The interval 455-470 is CTP-binding; it reads STMGEIRWPGTKKTFE. A helical transmembrane segment spans residues 469 to 489; it reads FEGTMTSIFAQIISVALILIF. Over 490–491 the chain is Cytoplasmic; it reads DS. A helical transmembrane segment spans residues 492–512; sequence GVDLNYSYAWILGSISTVSLL. The Extracellular segment spans residues 513–534; it reads EAYTTQIDNLLLPLYLLILLMA.

It belongs to the polyprenol kinase family.

The protein resides in the endoplasmic reticulum membrane. It carries out the reaction a di-trans,poly-cis-dolichol + CTP = a di-trans,poly-cis-dolichyl phosphate + CDP + H(+). The protein operates within protein modification; protein glycosylation. Functionally, catalyzes CTP-mediated phosphorylation of dolichol, the terminal step in de novo dolichyl monophosphate (Dol-P) biosynthesis. Dol-P is a lipid carrier essential for the synthesis of N-linked and O-linked oligosaccharides and for GPI anchors. The sequence is that of Dolichol kinase from Mus musculus (Mouse).